A 309-amino-acid chain; its full sequence is Probable manganese-dependent inorganic pyrophosphatase (309 aa).

Residues His-9, Asp-13, Asp-15, Asp-75, His-97, and Asp-149 each coordinate Mn(2+).

Belongs to the PPase class C family. Mn(2+) is required as a cofactor.

It localises to the cytoplasm. It catalyses the reaction diphosphate + H2O = 2 phosphate + H(+). The chain is Probable manganese-dependent inorganic pyrophosphatase from Bacillus licheniformis (strain ATCC 14580 / DSM 13 / JCM 2505 / CCUG 7422 / NBRC 12200 / NCIMB 9375 / NCTC 10341 / NRRL NRS-1264 / Gibson 46).